The following is an 83-amino-acid chain: Apolipoprotein C-I, acidic form (83 aa).

The N-terminal stretch at 1-26 is a signal peptide; that stretch reads MRLFLSLPVLVVVLSMVLEGPAPAQG.

This sequence belongs to the apolipoprotein C1 family.

Its subcellular location is the secreted. Its function is as follows. Inhibitor of lipoprotein binding to the low density lipoprotein (LDL) receptor, LDL receptor-related protein, and very low density lipoprotein (VLDL) receptor. Associates with high density lipoproteins (HDL) and the triacylglycerol-rich lipoproteins in the plasma and makes up about 10% of the protein of the VLDL and 2% of that of HDL. Appears to interfere directly with fatty acid uptake and is also the major plasma inhibitor of cholesteryl ester transfer protein (CETP). Binds free fatty acids and reduces their intracellular esterification. Modulates the interaction of APOE with beta-migrating VLDL and inhibits binding of beta-VLDL to the LDL receptor-related protein. The sequence is that of Apolipoprotein C-I, acidic form (APOC1A) from Pongo abelii (Sumatran orangutan).